The primary structure comprises 204 residues: GTP cyclohydrolase-2 (204 aa).

A GTP-binding site is contributed by 49–53 (RIHSE). 3 residues coordinate Zn(2+): cysteine 54, cysteine 65, and cysteine 67. Residues glutamine 70, 92–94 (EGR), and threonine 114 contribute to the GTP site. Catalysis depends on aspartate 126, which acts as the Proton acceptor. The active-site Nucleophile is arginine 128. GTP contacts are provided by threonine 149 and lysine 154.

The protein belongs to the GTP cyclohydrolase II family. It depends on Zn(2+) as a cofactor.

It carries out the reaction GTP + 4 H2O = 2,5-diamino-6-hydroxy-4-(5-phosphoribosylamino)-pyrimidine + formate + 2 phosphate + 3 H(+). Its pathway is cofactor biosynthesis; riboflavin biosynthesis; 5-amino-6-(D-ribitylamino)uracil from GTP: step 1/4. Functionally, catalyzes the conversion of GTP to 2,5-diamino-6-ribosylamino-4(3H)-pyrimidinone 5'-phosphate (DARP), formate and pyrophosphate. This chain is GTP cyclohydrolase-2, found in Shewanella baltica (strain OS223).